Reading from the N-terminus, the 1343-residue chain is DNA-directed RNA polymerase subunit beta (1343 aa).

Belongs to the RNA polymerase beta chain family. As to quaternary structure, the RNAP catalytic core consists of 2 alpha, 1 beta, 1 beta' and 1 omega subunit. When a sigma factor is associated with the core the holoenzyme is formed, which can initiate transcription.

It carries out the reaction RNA(n) + a ribonucleoside 5'-triphosphate = RNA(n+1) + diphosphate. In terms of biological role, DNA-dependent RNA polymerase catalyzes the transcription of DNA into RNA using the four ribonucleoside triphosphates as substrates. This is DNA-directed RNA polymerase subunit beta from Shewanella frigidimarina (strain NCIMB 400).